A 241-amino-acid chain; its full sequence is 1-(5-phosphoribosyl)-5-[(5-phosphoribosylamino)methylideneamino] imidazole-4-carboxamide isomerase (241 aa).

The active-site Proton acceptor is the Asp-8. The Proton donor role is filled by Asp-129.

The protein belongs to the HisA/HisF family.

It localises to the cytoplasm. It catalyses the reaction 1-(5-phospho-beta-D-ribosyl)-5-[(5-phospho-beta-D-ribosylamino)methylideneamino]imidazole-4-carboxamide = 5-[(5-phospho-1-deoxy-D-ribulos-1-ylimino)methylamino]-1-(5-phospho-beta-D-ribosyl)imidazole-4-carboxamide. The protein operates within amino-acid biosynthesis; L-histidine biosynthesis; L-histidine from 5-phospho-alpha-D-ribose 1-diphosphate: step 4/9. The protein is 1-(5-phosphoribosyl)-5-[(5-phosphoribosylamino)methylideneamino] imidazole-4-carboxamide isomerase of Chloroflexus aurantiacus (strain ATCC 29364 / DSM 637 / Y-400-fl).